The primary structure comprises 518 residues: Putative cytochrome P450 CYP13A6 (518 aa).

Cysteine 463 serves as a coordination point for heme.

It belongs to the cytochrome P450 family. Heme is required as a cofactor.

In terms of biological role, cytochromes P450 are a group of heme-thiolate monooxygenases. They oxidize a variety of structurally unrelated compounds, including steroids, fatty acids, and xenobiotics. The polypeptide is Putative cytochrome P450 CYP13A6 (cyp-13A6) (Caenorhabditis elegans).